Reading from the N-terminus, the 359-residue chain is MLTLSDFDFDLPPELIAQTALPDRTASRLLAVRRTEDAVHFEDRQFADLVDYLRPGDLLVFNDTRVIKARFFGHKASGGKVEVLVERLLDEHTVLAQIRSSKSPVEGTSLRLADAFDVTVGPRAEPFFTLRFPQPALDLIEQYGRLPLPPYIEHDPDSFDETRYQTVYARNPGAVAAPTAGLHFDDALFAKLDAMGIRRGFLTLHVGAGTFQPVRVENIAEHRMHSEWYEITPELAEAIRATRAAGGRVIAVGTTSMRALESAAQPDGTLNACSGETDIFITPGYRFRAVDLLVTNFHLPKSTLLMLVSAFAGMSAIREAYQHAIAQRYRFFSYGDAMLLTRAPTEPGEPGEPGETQSL.

It belongs to the QueA family. As to quaternary structure, monomer.

Its subcellular location is the cytoplasm. The enzyme catalyses 7-aminomethyl-7-carbaguanosine(34) in tRNA + S-adenosyl-L-methionine = epoxyqueuosine(34) in tRNA + adenine + L-methionine + 2 H(+). It participates in tRNA modification; tRNA-queuosine biosynthesis. In terms of biological role, transfers and isomerizes the ribose moiety from AdoMet to the 7-aminomethyl group of 7-deazaguanine (preQ1-tRNA) to give epoxyqueuosine (oQ-tRNA). The sequence is that of S-adenosylmethionine:tRNA ribosyltransferase-isomerase from Ralstonia pickettii (strain 12J).